The following is a 63-amino-acid chain: Small ribosomal subunit protein eS17 (63 aa).

Belongs to the eukaryotic ribosomal protein eS17 family.

The polypeptide is Small ribosomal subunit protein eS17 (Methanococcus maripaludis (strain DSM 14266 / JCM 13030 / NBRC 101832 / S2 / LL)).